The primary structure comprises 76 residues: Esculentin-2-ALa (76 aa).

Positions Met1–Cys22 are cleaved as a signal peptide. The propeptide occupies Glu23–Arg39. A disulfide bond links Cys70 and Cys76.

As to expression, expressed by the skin glands.

Its subcellular location is the secreted. Functionally, antimicrobial peptide with activity against Gram-positive and Gram-negative bacteria and against fungi. Has been tested against S.aureus (MIC=2.5 ug/mL), B.pumilus (MIC=2.5 ug/mL), B.cereus (MIC=7.5 ug/mL), E.coli (MIC=12.5 ug/mL), B.dysenteriae (MIC=7.5 ug/mL), A.cacoaceticus (MIC=25.0 ug/mL), P.aeruginosa (MIC=50.0 ug/mL) and C.albicans (MIC=2.5 ug/mL). Also shows a weak hemolytic activity. The chain is Esculentin-2-ALa from Amolops loloensis (Lolokou Sucker Frog).